We begin with the raw amino-acid sequence, 93 residues long: MRTYELMAVFSAHEDLFLQGSTAVRALLQENDAVIAREDHIGERELAYPLKKQKRGRYLLFIVQCEPGKVRELDHKLRLRHDLLTHLFVRVDS.

The protein belongs to the bacterial ribosomal protein bS6 family.

Functionally, binds together with bS18 to 16S ribosomal RNA. In Treponema pallidum (strain Nichols), this protein is Small ribosomal subunit protein bS6 (rpsF).